The following is a 60-amino-acid chain: Small ribosomal subunit protein eS17 (60 aa).

It belongs to the eukaryotic ribosomal protein eS17 family.

This is Small ribosomal subunit protein eS17 from Methanosphaera stadtmanae (strain ATCC 43021 / DSM 3091 / JCM 11832 / MCB-3).